Consider the following 104-residue polypeptide: Large ribosomal subunit protein eL30 (104 aa).

It belongs to the eukaryotic ribosomal protein eL30 family.

The polypeptide is Large ribosomal subunit protein eL30 (RPL30) (Leishmania major).